The sequence spans 513 residues: ATP synthase subunit alpha (513 aa).

169–176 is a binding site for ATP; it reads GDRQIGKT.

The protein belongs to the ATPase alpha/beta chains family. As to quaternary structure, F-type ATPases have 2 components, CF(1) - the catalytic core - and CF(0) - the membrane proton channel. CF(1) has five subunits: alpha(3), beta(3), gamma(1), delta(1), epsilon(1). CF(0) has three main subunits: a(1), b(2) and c(9-12). The alpha and beta chains form an alternating ring which encloses part of the gamma chain. CF(1) is attached to CF(0) by a central stalk formed by the gamma and epsilon chains, while a peripheral stalk is formed by the delta and b chains.

The protein resides in the cell inner membrane. The catalysed reaction is ATP + H2O + 4 H(+)(in) = ADP + phosphate + 5 H(+)(out). Its function is as follows. Produces ATP from ADP in the presence of a proton gradient across the membrane. The alpha chain is a regulatory subunit. This Vibrio alginolyticus protein is ATP synthase subunit alpha.